The chain runs to 731 residues: NADH-ubiquinone oxidoreductase 75 kDa subunit, mitochondrial (731 aa).

Residues 1–27 (MIRAPLVKALGALGSPTHQMASRAVRT) constitute a mitochondrion transit peptide. Positions 40–118 (EKIEVFVDDI…GWRIKTNSDL (79 aa)) constitute a 2Fe-2S ferredoxin-type domain. [2Fe-2S] cluster contacts are provided by Cys74, Cys85, Cys88, and Cys102. Positions 118–157 (LTRKAREGVMEFLLMNHPLDCPICDQGGECDLQDQAMAFG) constitute a 4Fe-4S His(Cys)3-ligated-type domain. Residues His134, Cys138, Cys141, Cys147, Cys190, Cys193, Cys196, and Cys240 each contribute to the [4Fe-4S] cluster site. The 57-residue stretch at 259 to 315 (IRKVSSIDVLDAVGSNIVVSTRTNEVLRILPRENEDVNEEWLADKSRFACDGLKRQR) folds into the 4Fe-4S Mo/W bis-MGD-type domain.

The protein belongs to the complex I 75 kDa subunit family. Complex I is composed of about 45 different subunits. The cofactor is [2Fe-2S] cluster. It depends on [4Fe-4S] cluster as a cofactor.

The protein resides in the mitochondrion inner membrane. It carries out the reaction a ubiquinone + NADH + 5 H(+)(in) = a ubiquinol + NAD(+) + 4 H(+)(out). Its function is as follows. Core subunit of the mitochondrial membrane respiratory chain NADH dehydrogenase (Complex I) that is believed to belong to the minimal assembly required for catalysis. Complex I functions in the transfer of electrons from NADH to the respiratory chain. The immediate electron acceptor for the enzyme is believed to be ubiquinone. This is the largest subunit of complex I and it is a component of the iron-sulfur (IP) fragment of the enzyme. It may form part of the active site crevice where NADH is oxidized. The protein is NADH-ubiquinone oxidoreductase 75 kDa subunit, mitochondrial of Drosophila melanogaster (Fruit fly).